The following is a 66-amino-acid chain: Large ribosomal subunit protein uL29 (66 aa).

It belongs to the universal ribosomal protein uL29 family.

This chain is Large ribosomal subunit protein uL29, found in Ruegeria sp. (strain TM1040) (Silicibacter sp.).